Here is a 675-residue protein sequence, read N- to C-terminus: Protein distal antenna (675 aa).

The 52-residue stretch at 5–56 (TKGKRPLRHLTATDKIDAIQRIHDGESKASVARDIGVPESTLRGWCKNEEKL) folds into the HTH psq-type domain. Residues 32 to 52 (KASVARDIGVPESTLRGWCKN) constitute a DNA-binding region (H-T-H motif). 5 disordered regions span residues 239–269 (QSLRNARPKANTSQSPRTSNLSDVNGDKNPS), 337–393 (LYSS…PEDT), 458–534 (LNII…SKCN), 546–596 (FQNP…AHKS), and 655–675 (ERQQQNAVSSGEERTRVRRRK). The span at 339–368 (SSMPRPSSPQQSSSPPQQHQQVQHHPSTQT) shows a compositional bias: low complexity. Residues 369-384 (PTPPIVSTPQPTPPSS) show a composition bias toward pro residues. The span at 469–478 (VKSEPEDLSN) shows a compositional bias: basic and acidic residues. The span at 479–493 (HNHSSSNAAAVAAPA) shows a compositional bias: low complexity. Polar residues predominate over residues 499 to 508 (FNPSPSTSAK). Over residues 513–528 (QEDDEEQAGPADDESP) the composition is skewed to acidic residues. The span at 559–579 (NLSIRSNNSPRRRSVSPAVSN) shows a compositional bias: low complexity.

In terms of assembly, homomers. Interacts with itself, danr, ey and dac to form a complex (or complexes) containing the RD factors.

Its subcellular location is the nucleus. In terms of biological role, probable transcription factor with a role in the retinal determination (RD) network. Contributes to differentiation of antenna-specific characteristics. This chain is Protein distal antenna, found in Aedes aegypti (Yellowfever mosquito).